The sequence spans 181 residues: Inner membrane-spanning protein YciB (181 aa).

Helical transmembrane passes span 10–30 (LVIF…GALI), 50–70 (MHLI…ILHD), 80–100 (IVYA…KPIL), 118–138 (VTWY…YVAF), and 148–168 (FKVF…VFYL).

The protein belongs to the YciB family.

The protein localises to the cell inner membrane. Its function is as follows. Plays a role in cell envelope biogenesis, maintenance of cell envelope integrity and membrane homeostasis. The polypeptide is Inner membrane-spanning protein YciB (Shewanella piezotolerans (strain WP3 / JCM 13877)).